Consider the following 65-residue polypeptide: Putative potassium channel toxin Ts21 (65 aa).

Residues 1 to 25 form the signal peptide; it reads MNKVYLVAILVLSVLLVANVSPIEG. 3 disulfides stabilise this stretch: cysteine 31–cysteine 53, cysteine 38–cysteine 61, and cysteine 42–cysteine 63.

It belongs to the short scorpion toxin superfamily. Potassium channel inhibitor family. Alpha-KTx 11 subfamily. In terms of tissue distribution, expressed by the venom gland.

It localises to the secreted. Functionally, this recombinant toxin inhibits the mammalian voltage-gated potassium channels Kv1.3/KCNA3 in vitro with an IC(50) of 26.40 nM. The sequence is that of Putative potassium channel toxin Ts21 from Tityus serrulatus (Brazilian scorpion).